The primary structure comprises 203 residues: Chromophore lyase CpcT/CpeT 3 (203 aa).

It belongs to the CpcT/CpeT biliprotein lyase family.

Covalently attaches a chromophore to Cys residue(s) of phycobiliproteins. This Gloeobacter violaceus (strain ATCC 29082 / PCC 7421) protein is Chromophore lyase CpcT/CpeT 3.